A 353-amino-acid chain; its full sequence is N-formyl peptide receptor 3 (353 aa).

At methionine 1–isoleucine 27 the chain is on the extracellular side. Residues asparagine 4 and asparagine 10 are each glycosylated (N-linked (GlcNAc...) asparagine). Residues phenylalanine 28 to valine 50 traverse the membrane as a helical segment. The Cytoplasmic segment spans residues alanine 51–threonine 61. A helical membrane pass occupies residues isoleucine 62–valine 83. At serine 84–leucine 100 the chain is on the extracellular side. Residues cysteine 98 and cysteine 176 are joined by a disulfide bond. Residues valine 101–leucine 121 form a helical membrane-spanning segment. Residues aspartate 122–serine 140 are Cytoplasmic-facing. A helical transmembrane segment spans residues leucine 141–isoleucine 162. The Extracellular segment spans residues phenylalanine 163–histidine 205. Residues phenylalanine 206–alanine 226 traverse the membrane as a helical segment. The Cytoplasmic portion of the chain corresponds to lysine 227 to valine 242. Residues phenylalanine 243–valine 266 form a helical membrane-spanning segment. Residues tryptophan 267 to proline 286 are Extracellular-facing. Residues threonine 287–glycine 306 traverse the membrane as a helical segment. Residues arginine 307–methionine 353 lie on the Cytoplasmic side of the membrane. Residues glutamate 327 to methionine 353 form a disordered region. A compositionally biased stretch (polar residues) spans serine 331–serine 343.

Belongs to the G-protein coupled receptor 1 family. Detected in various tissues with highest expression in lung.

It localises to the cell membrane. Low affinity receptor for N-formyl-methionyl peptides, which are powerful neutrophils chemotactic factors. Binding of FMLP to the receptor causes activation of neutrophils. This response is mediated via a G-protein that activates a phosphatidylinositol-calcium second messenger system. Acts as a receptor for humanin. This is N-formyl peptide receptor 3 (FPR3) from Homo sapiens (Human).